The sequence spans 101 residues: Citrate lyase acyl carrier protein (101 aa).

S14 is modified (O-(phosphoribosyl dephospho-coenzyme A)serine).

It belongs to the CitD family. In terms of assembly, oligomer with a subunit composition of (alpha,beta,gamma)6.

It is found in the cytoplasm. Covalent carrier of the coenzyme of citrate lyase. This Streptococcus uberis (strain ATCC BAA-854 / 0140J) protein is Citrate lyase acyl carrier protein.